Consider the following 500-residue polypeptide: L-arabinose isomerase (500 aa).

4 residues coordinate Mn(2+): Glu-306, Glu-333, His-350, and His-450.

This sequence belongs to the arabinose isomerase family. Homohexamer. Requires Mn(2+) as cofactor.

It carries out the reaction beta-L-arabinopyranose = L-ribulose. Its pathway is carbohydrate degradation; L-arabinose degradation via L-ribulose; D-xylulose 5-phosphate from L-arabinose (bacterial route): step 1/3. Catalyzes the conversion of L-arabinose to L-ribulose. This Yersinia pseudotuberculosis serotype O:3 (strain YPIII) protein is L-arabinose isomerase.